The chain runs to 86 residues: MANIKSQKKRILTNEKARLRNNAVKSELRTAIRAVNTAVESADKDAAATALVSASRKLDKAVSKGVLHKNNAANRKSAISKKVNAL.

Belongs to the bacterial ribosomal protein bS20 family.

Its function is as follows. Binds directly to 16S ribosomal RNA. The sequence is that of Small ribosomal subunit protein bS20 from Pseudarthrobacter chlorophenolicus (strain ATCC 700700 / DSM 12829 / CIP 107037 / JCM 12360 / KCTC 9906 / NCIMB 13794 / A6) (Arthrobacter chlorophenolicus).